Consider the following 264-residue polypeptide: Thymidylate synthase (264 aa).

Arg21 contacts dUMP. Residue His51 participates in (6R)-5,10-methylene-5,6,7,8-tetrahydrofolate binding. Residue Arg126–Arg127 coordinates dUMP. Residue Cys146 is the Nucleophile of the active site. DUMP is bound by residues Arg166–Asp169, Asn177, and His207–Tyr209. Asp169 contacts (6R)-5,10-methylene-5,6,7,8-tetrahydrofolate. Ala263 is a binding site for (6R)-5,10-methylene-5,6,7,8-tetrahydrofolate.

This sequence belongs to the thymidylate synthase family. Bacterial-type ThyA subfamily. Homodimer.

It is found in the cytoplasm. The catalysed reaction is dUMP + (6R)-5,10-methylene-5,6,7,8-tetrahydrofolate = 7,8-dihydrofolate + dTMP. It functions in the pathway pyrimidine metabolism; dTTP biosynthesis. Its function is as follows. Catalyzes the reductive methylation of 2'-deoxyuridine-5'-monophosphate (dUMP) to 2'-deoxythymidine-5'-monophosphate (dTMP) while utilizing 5,10-methylenetetrahydrofolate (mTHF) as the methyl donor and reductant in the reaction, yielding dihydrofolate (DHF) as a by-product. This enzymatic reaction provides an intracellular de novo source of dTMP, an essential precursor for DNA biosynthesis. The protein is Thymidylate synthase of Escherichia fergusonii (strain ATCC 35469 / DSM 13698 / CCUG 18766 / IAM 14443 / JCM 21226 / LMG 7866 / NBRC 102419 / NCTC 12128 / CDC 0568-73).